Consider the following 246-residue polypeptide: Small ribosomal subunit protein uS2 (246 aa).

Belongs to the universal ribosomal protein uS2 family.

The protein is Small ribosomal subunit protein uS2 of Burkholderia cenocepacia (strain HI2424).